Consider the following 249-residue polypeptide: MAPSRKFFVGGNWKMNGRKKCLGELICTLNAAKLPADTEVVCAPPSAYIDFARQKLDPKIAVAAQNCYKVTNGAFTGEISPGMIKDLGAEWVVLGHSERRHVFGESDELIGQKVAHALAEGLGVIACIGEKLDEREAGITEKVVFEQTKVIADNVKDWSKVVLAYEPVWAIGTGKTATPQQAQEVHEKLRGWLKCNVSDEVAQSTRIIYGGSVTGATCKELASQPDVDGFLVGGASLKPEFVDIINAKQ.

Asn-12 and Lys-14 together coordinate substrate. Lys-14 carries the N6-acetyllysine modification. A 3'-nitrotyrosine modification is found at Tyr-68. 2 positions are modified to phosphoserine: Ser-80 and Ser-106. Lys-142 participates in a covalent cross-link: Glycyl lysine isopeptide (Lys-Gly) (interchain with G-Cter in SUMO1). The residue at position 149 (Lys-149) is an N6-succinyllysine. Lys-156 is subject to N6-acetyllysine; alternate. The residue at position 156 (Lys-156) is an N6-succinyllysine; alternate. Ser-159 carries the post-translational modification Phosphoserine. The active-site Proton acceptor is the Glu-166. Thr-173 is modified (phosphothreonine). Lys-194 carries the N6-acetyllysine; alternate modification. Lys-194 carries the post-translational modification N6-succinyllysine; alternate. An N6-methyllysine; alternate modification is found at Lys-194. Phosphoserine is present on Ser-198. Tyr-209 carries the 3'-nitrotyrosine modification. At Ser-212 the chain carries Phosphoserine. Thr-214 carries the phosphothreonine modification. Ser-223 is modified (phosphoserine). Lys-238 is modified (N6-acetyllysine).

It belongs to the triosephosphate isomerase family. Homodimer.

The protein resides in the cytoplasm. The catalysed reaction is D-glyceraldehyde 3-phosphate = dihydroxyacetone phosphate. It catalyses the reaction dihydroxyacetone phosphate = methylglyoxal + phosphate. It functions in the pathway carbohydrate biosynthesis; gluconeogenesis. Its pathway is carbohydrate degradation; glycolysis; D-glyceraldehyde 3-phosphate from glycerone phosphate: step 1/1. Its function is as follows. Triosephosphate isomerase is an extremely efficient metabolic enzyme that catalyzes the interconversion between dihydroxyacetone phosphate (DHAP) and D-glyceraldehyde-3-phosphate (G3P) in glycolysis and gluconeogenesis. In terms of biological role, it is also responsible for the non-negligible production of methylglyoxal a reactive cytotoxic side-product that modifies and can alter proteins, DNA and lipids. This is Triosephosphate isomerase from Mesocricetus auratus (Golden hamster).